The chain runs to 596 residues: Elongation factor 4 (596 aa).

The tr-type G domain occupies 2 to 184 (KHIRNFSIIA…VIVAKIPPPE (183 aa)). GTP-binding positions include 14-19 (DHGKST) and 131-134 (NKID).

Belongs to the TRAFAC class translation factor GTPase superfamily. Classic translation factor GTPase family. LepA subfamily.

The protein resides in the cell inner membrane. It catalyses the reaction GTP + H2O = GDP + phosphate + H(+). Functionally, required for accurate and efficient protein synthesis under certain stress conditions. May act as a fidelity factor of the translation reaction, by catalyzing a one-codon backward translocation of tRNAs on improperly translocated ribosomes. Back-translocation proceeds from a post-translocation (POST) complex to a pre-translocation (PRE) complex, thus giving elongation factor G a second chance to translocate the tRNAs correctly. Binds to ribosomes in a GTP-dependent manner. This chain is Elongation factor 4, found in Shewanella sp. (strain W3-18-1).